The chain runs to 179 residues: Zinc finger HIT domain-containing protein 3 (179 aa).

Zn(2+) contacts are provided by Cys11, Cys14, Cys22, Cys25, Cys30, Cys34, His38, and Cys49. The HIT-type zinc finger occupies 11–49; it reads CVVCLEKPKYRCPACRVPYCSLPCFRKHKAPPLQQLPVC. Ser104 carries the post-translational modification Phosphoserine.

Thyroid receptor interacting proteins (TRIPs) specifically interact with the ligand binding domain of the thyroid receptor (TR). Requires the presence of thyroid hormone for its interaction. Interacts with NUFIP1. Interacts (via HIT-type zinc finger) with the RUVBL1/RUVBL2 complex in the presence of ADP.

The protein resides in the cytoplasm. Its subcellular location is the nucleus. The chain is Zinc finger HIT domain-containing protein 3 (ZNHIT3) from Bos taurus (Bovine).